A 131-amino-acid chain; its full sequence is Small ribosomal subunit protein uS8 (131 aa).

The protein belongs to the universal ribosomal protein uS8 family. In terms of assembly, part of the 30S ribosomal subunit. Contacts proteins S5 and S12.

Functionally, one of the primary rRNA binding proteins, it binds directly to 16S rRNA central domain where it helps coordinate assembly of the platform of the 30S subunit. The protein is Small ribosomal subunit protein uS8 of Novosphingobium aromaticivorans (strain ATCC 700278 / DSM 12444 / CCUG 56034 / CIP 105152 / NBRC 16084 / F199).